Consider the following 72-residue polypeptide: Translation initiation factor IF-1 (72 aa).

In terms of domain architecture, S1-like spans 1–72 (MSKDDVIEMQ…SRGRITWRAK (72 aa)).

Belongs to the IF-1 family. As to quaternary structure, component of the 30S ribosomal translation pre-initiation complex which assembles on the 30S ribosome in the order IF-2 and IF-3, IF-1 and N-formylmethionyl-tRNA(fMet); mRNA recruitment can occur at any time during PIC assembly.

It is found in the cytoplasm. One of the essential components for the initiation of protein synthesis. Stabilizes the binding of IF-2 and IF-3 on the 30S subunit to which N-formylmethionyl-tRNA(fMet) subsequently binds. Helps modulate mRNA selection, yielding the 30S pre-initiation complex (PIC). Upon addition of the 50S ribosomal subunit IF-1, IF-2 and IF-3 are released leaving the mature 70S translation initiation complex. The sequence is that of Translation initiation factor IF-1 from Clostridium novyi (strain NT).